The sequence spans 434 residues: MSIQKIHAREILDSRGEPTVEVDLHTAKGHFRAAVPSGASTGIHEALEPRDGDKKRFLGKGVLKAVEHINKTIGPALIEKKISVVEQEKIDKVMIEMDGTENKSKFGANAILGVSLAVCKAGAAEKGVPLYRHIADLAGNTELILPVPAFNVINGGSHAGNKLAMQEFMVLPVGAASFHDAMRVGAEVYHSLKGVIKAKYGKDATNVGGEGGFAPNILDNHEALELLKAAIAQAGYTDKVVIGMDVAASEFCRDGRYHLDFKSPPHTKRYITGEQLGEIYRGFIKDYPVVSIEDPFDQDDWEAWKRFVFHVDIQVVGDDLTVTNPKRIAHGAEQHACNCLLLKVNQIGSVTESIQACKLAQSHGWGVMVSHRSGETEDTFIADLVVGLCTGQIKTGAPCRSERLAKYNQLMRIEEALGDKAKFAGRKFRNPKAK.

An N-acetylserine modification is found at serine 2. 2 residues coordinate substrate: histidine 158 and glutamate 167. The active-site Proton donor is glutamate 210. The Mg(2+) site is built by aspartate 245, glutamate 293, and aspartate 318. Residues glutamate 293 and aspartate 318 each contribute to the substrate site. Lysine 343 functions as the Proton acceptor in the catalytic mechanism. Residues 370–373 and lysine 394 each bind substrate; that span reads SHRS.

The protein belongs to the enolase family. In terms of assembly, homodimer. Interacts with PNKD. The cofactor is Mg(2+).

It localises to the cytoplasm. The enzyme catalyses (2R)-2-phosphoglycerate = phosphoenolpyruvate + H2O. The protein operates within carbohydrate degradation; glycolysis; pyruvate from D-glyceraldehyde 3-phosphate: step 4/5. Its function is as follows. Glycolytic enzyme that catalyzes the conversion of 2-phosphoglycerate to phosphoenolpyruvate. This Gallus gallus (Chicken) protein is Beta-enolase (ENO3).